The chain runs to 287 residues: Pantothenate synthetase (287 aa).

30–37 (MGALHEGH) is a binding site for ATP. The Proton donor role is filled by His37. Position 61 (Gln61) interacts with (R)-pantoate. Gln61 is a beta-alanine binding site. 147-150 (GEKD) is a binding site for ATP. (R)-pantoate is bound at residue Gln153. 184–187 (MSSR) serves as a coordination point for ATP.

Belongs to the pantothenate synthetase family. As to quaternary structure, homodimer.

It is found in the cytoplasm. It carries out the reaction (R)-pantoate + beta-alanine + ATP = (R)-pantothenate + AMP + diphosphate + H(+). The protein operates within cofactor biosynthesis; (R)-pantothenate biosynthesis; (R)-pantothenate from (R)-pantoate and beta-alanine: step 1/1. Its function is as follows. Catalyzes the condensation of pantoate with beta-alanine in an ATP-dependent reaction via a pantoyl-adenylate intermediate. This chain is Pantothenate synthetase, found in Granulibacter bethesdensis (strain ATCC BAA-1260 / CGDNIH1).